The sequence spans 239 residues: Ribosomal RNA small subunit methyltransferase G (239 aa).

Residues G77, F82, 128–129 (AE), and R146 each bind S-adenosyl-L-methionine. The interval 215–239 (DKKRQTPKKYPRKPGTPNKTPLLEK) is disordered.

It belongs to the methyltransferase superfamily. RNA methyltransferase RsmG family.

The protein localises to the cytoplasm. Functionally, specifically methylates the N7 position of guanine in position 535 of 16S rRNA. The protein is Ribosomal RNA small subunit methyltransferase G of Staphylococcus aureus (strain bovine RF122 / ET3-1).